Reading from the N-terminus, the 239-residue chain is tRNA uridine(34) hydroxylase (239 aa).

The Rhodanese domain occupies 124-214 (QGRELVMLDT…GILKYFEETD (91 aa)). Cysteine 178 acts as the Cysteine persulfide intermediate in catalysis.

The protein belongs to the TrhO family.

It catalyses the reaction uridine(34) in tRNA + AH2 + O2 = 5-hydroxyuridine(34) in tRNA + A + H2O. Functionally, catalyzes oxygen-dependent 5-hydroxyuridine (ho5U) modification at position 34 in tRNAs. In Bordetella parapertussis (strain 12822 / ATCC BAA-587 / NCTC 13253), this protein is tRNA uridine(34) hydroxylase.